A 78-amino-acid polypeptide reads, in one-letter code: DNA-directed RNA polymerase subunit omega (78 aa).

It belongs to the RNA polymerase subunit omega family. As to quaternary structure, in cyanobacteria the RNAP catalytic core is composed of 2 alpha, 1 beta, 1 beta', 1 gamma and 1 omega subunit. When a sigma factor is associated with the core the holoenzyme is formed, which can initiate transcription.

The enzyme catalyses RNA(n) + a ribonucleoside 5'-triphosphate = RNA(n+1) + diphosphate. In terms of biological role, promotes RNA polymerase assembly. Latches the N- and C-terminal regions of the beta' subunit thereby facilitating its interaction with the beta and alpha subunits. This chain is DNA-directed RNA polymerase subunit omega, found in Prochlorococcus marinus (strain AS9601).